A 156-amino-acid polypeptide reads, in one-letter code: Movement protein P17 (156 aa).

The interval 38-54 (AEDVEEEAIAAQEELEF) is homodimerization. Positions 57–156 (DEAQARHSCL…RAAPKLIKRG (100 aa)) are RNA-binding. Phosphoserine is present on residues Ser-71, Ser-79, Ser-137, and Ser-140. The segment at 106–156 (ASYFSSSARPLPPPPAPSLMSWTPIAKYHPSSPTSTSSKLRRAAPKLIKRG) is disordered. Basic residues predominate over residues 144–156 (KLRRAAPKLIKRG).

It belongs to the polerovirus movement protein family. As to quaternary structure, homodimer. Expressed as a nonphosphorylated 20kDa form and a phosphorylated 22kDa form. Phosphorylated by a host PKC-related kinase. Serine phosphorylation is required for plamodesma targeting.

It is found in the host cell junction. Its subcellular location is the host plasmodesma. It localises to the host chloroplast envelope. The protein resides in the host Golgi apparatus. The protein localises to the host mitochondrion outer membrane. Functionally, together with movement protein P3a, facilitates long-distance movement of virions in host. Transports viral genome to neighboring plant cells directly through plasmosdesmata, without any budding. The movement protein allows efficient cell to cell propagation, by bypassing the host cell wall barrier. Binds ssRNA. The polypeptide is Movement protein P17 (Solanum tuberosum (Potato)).